A 264-amino-acid chain; its full sequence is NAD-capped RNA hydrolase NudC (264 aa).

Arg-70 is a binding site for substrate. Residues Cys-99 and Cys-102 each coordinate Zn(2+). Glu-112 serves as a coordination point for substrate. The Zn(2+) site is built by Cys-117 and Cys-120. Residue Tyr-125 participates in substrate binding. Residues 126–253 (PVICPSIIVA…TIARKLIHVT (128 aa)) enclose the Nudix hydrolase domain. The a divalent metal cation site is built by Ala-162, Glu-178, and Glu-182. A Nudix box motif is present at residues 163-184 (GFVEVGETFEQAVQREVFEETG). 196–203 (QPWAFPNS) contacts substrate. Glu-223 is an a divalent metal cation binding site. Ala-246 contacts substrate.

Belongs to the Nudix hydrolase family. NudC subfamily. Homodimer. It depends on Mg(2+) as a cofactor. The cofactor is Mn(2+). Requires Zn(2+) as cofactor.

It catalyses the reaction a 5'-end NAD(+)-phospho-ribonucleoside in mRNA + H2O = a 5'-end phospho-adenosine-phospho-ribonucleoside in mRNA + beta-nicotinamide D-ribonucleotide + 2 H(+). It carries out the reaction NAD(+) + H2O = beta-nicotinamide D-ribonucleotide + AMP + 2 H(+). The enzyme catalyses NADH + H2O = reduced beta-nicotinamide D-ribonucleotide + AMP + 2 H(+). Its function is as follows. mRNA decapping enzyme that specifically removes the nicotinamide adenine dinucleotide (NAD) cap from a subset of mRNAs by hydrolyzing the diphosphate linkage to produce nicotinamide mononucleotide (NMN) and 5' monophosphate mRNA. The NAD-cap is present at the 5'-end of some mRNAs and stabilizes RNA against 5'-processing. Has preference for mRNAs with a 5'-end purine. Catalyzes the hydrolysis of a broad range of dinucleotide pyrophosphates. The polypeptide is NAD-capped RNA hydrolase NudC (Haemophilus influenzae (strain 86-028NP)).